We begin with the raw amino-acid sequence, 739 residues long: Nucleoprotein (739 aa).

Positions 334–363 form a coiled coil; sequence VNVGEQYQQLREAATEAEKQLQQYAESREL. Disordered stretches follow at residues 414–475 and 498–642; these read RPNL…YHDD and FELQ…IGQS. Positions 570–579 are enriched in acidic residues; the sequence is TPIDQGDDDP. Residues 614–624 are compositionally biased toward basic and acidic residues; the sequence is AEAHEPPHKSS. The span at 625–634 shows a compositional bias: polar residues; sequence NEPAETSQLN.

This sequence belongs to the filoviruses nucleoprotein family. In terms of assembly, homooligomer. Homomultimerizes to form the nucleocapsid. Binds to viral genomic RNA. Interacts with VP35 and VP30 to form the nucleocapsid. Interacts with host PPP2R5C; this interaction leads to VP30 dephosphorylation and viral transcription. Interacts with VP24; this interaction facilitates nucleocapsid assembly and genome packaging. Interacts with matrix protein VP40; this interaction allows recruitment of the nucleocapsid into progeny virions. Interacts with host STAU1. Interacts with host NXF1 (via RNA-binding domain); this interaction recruits NXF1 to the inclusion bodies were viral replication takes place, probably to export viral mRNA-NXF1 complexes from these sites. Interacts with host CCDC92; this interaction sequesters NP in the host cytoplasm. Interacts with host TRIM14. Post-translationally, phosphorylated and O-glycosylated by host. Acetylated by host EP300 in vitro.

Its subcellular location is the virion. It localises to the host cytoplasm. Functionally, oligomerizes into helical capsid to encapsidate the viral genome, protecting it from nucleases and the cellular innate immune response. VP35 binds to and stabilizes monomeric NP, keeping it soluble. Upon virus replication, NP is recruited to bind cooperatively viral genomic RNA and VP35 is released. The encapsidated genomic RNA is termed the nucleocapsid and serves as template for transcription and replication. The nucleocapsid is helical with a pitch of 10.81 NP per turn and a diameter of about 22nm. Each NP binds to six nucleotides of viral genomic RNA, three being exposed to the solvant and three hidden into the nucleocapsid. Also recruits host PPP2R5C phosphatase to dephosphorylate VP30 and thereby promote viral transcription. Upon virion assembly and budding, NP binds to VP24 and possibly host STAU1. This Homo sapiens (Human) protein is Nucleoprotein (NP).